The chain runs to 144 residues: Fluoride-specific ion channel FluC (144 aa).

Transmembrane regions (helical) follow at residues 7–27 (LIVMVGGALGTLARYLVSVAA), 33–53 (FIPWGTILPINALGSFVIGFF), 71–91 (LFVMIGLCGGYTTFSSFSLQT), and 105–125 (VNVAASVILCIGAVALGHITA). Positions 79 and 82 each coordinate Na(+).

Belongs to the fluoride channel Fluc/FEX (TC 1.A.43) family.

It localises to the cell inner membrane. It catalyses the reaction fluoride(in) = fluoride(out). With respect to regulation, na(+) is not transported, but it plays an essential structural role and its presence is essential for fluoride channel function. Fluoride-specific ion channel. Important for reducing fluoride concentration in the cell, thus reducing its toxicity. This Gluconobacter oxydans (strain 621H) (Gluconobacter suboxydans) protein is Fluoride-specific ion channel FluC.